The sequence spans 522 residues: Maturase K (522 aa).

It belongs to the intron maturase 2 family. MatK subfamily.

The protein localises to the plastid. It is found in the chloroplast. Usually encoded in the trnK tRNA gene intron. Probably assists in splicing its own and other chloroplast group II introns. This chain is Maturase K, found in Gladiolus papilio (Goldblotch gladiolus).